The chain runs to 147 residues: MSIRLENLSYTPGARKEKHRKGRGHAAGKGKQAGRGQSGQKKRSTVRLGFEGGQNPWFRRVPKRGFRNFNKKEYEIFNISDLESRYQDGDTVSLESLYLKKVLKKRNMKAKLLANGDLTKKLTVTTNAFSIAAQKKIEEKGGKIEVR.

The tract at residues 1–46 (MSIRLENLSYTPGARKEKHRKGRGHAAGKGKQAGRGQSGQKKRSTV) is disordered. Positions 16-28 (KEKHRKGRGHAAG) are enriched in basic residues.

Belongs to the universal ribosomal protein uL15 family. As to quaternary structure, part of the 50S ribosomal subunit.

Its function is as follows. Binds to the 23S rRNA. The polypeptide is Large ribosomal subunit protein uL15 (Mesomycoplasma hyopneumoniae (strain J / ATCC 25934 / NCTC 10110) (Mycoplasma hyopneumoniae)).